Here is a 224-residue protein sequence, read N- to C-terminus: Putative adhesin A1C_06425 (224 aa).

Positions 1–22 (MKKLLLIATTSATILSSSISFA) are cleaved as a signal peptide.

This is Putative adhesin A1C_06425 from Rickettsia akari (strain Hartford).